Consider the following 199-residue polypeptide: Golgi to ER traffic protein 1 (199 aa).

Residues 1–11 (MLLPDLHPYTI) lie on the Lumenal side of the membrane. The chain crosses the membrane as a helical span at residues 12–31 (LLSIFLVLVVKQLVATIGKS). Residues 32–115 (TIQEFVWLVY…SIDKASNALI (84 aa)) are Cytoplasmic-facing. A coiled-coil region spans residues 76–116 (YAKWTKLNRQADKLSAELQKLNQEIQQQKSSIDKASNALIL). Residues 116 to 136 (LVLTTLPIWIARVFYRKTHLF) traverse the membrane as a helical segment. Topologically, residues 137–160 (YIRQGIFPKYVEWVLALPFLPNGA) are lumenal. Residues 161 to 177 (VGLTIWMFAVNSVVSNF) traverse the membrane as a helical segment. Residues 178-199 (SFLVSFPFAKRVSKPVRDTKVE) are Cytoplasmic-facing.

Belongs to the WRB/GET1 family. As to quaternary structure, component of the Golgi to ER traffic (GET) complex, which is composed of GET1, GET2 and GET3. Within the complex, GET1 and GET2 form a heterotetramer which is stabilized by phosphatidylinositol binding and which binds to the GET3 homodimer.

It localises to the endoplasmic reticulum membrane. Its subcellular location is the golgi apparatus membrane. Required for the post-translational delivery of tail-anchored (TA) proteins to the endoplasmic reticulum. Together with GET2, acts as a membrane receptor for soluble GET3, which recognizes and selectively binds the transmembrane domain of TA proteins in the cytosol. The GET complex cooperates with the HDEL receptor ERD2 to mediate the ATP-dependent retrieval of resident ER proteins that contain a C-terminal H-D-E-L retention signal from the Golgi to the ER. This chain is Golgi to ER traffic protein 1, found in Candida albicans (strain WO-1) (Yeast).